Here is a 119-residue protein sequence, read N- to C-terminus: Multidrug resistance protein EbrB (119 aa).

Helical transmembrane passes span 3–23, 31–51, 59–79, and 81–101; these read GMIF…MLKL, LPAA…SFSL, AYAT…HFIF, and EPFN…VFLL.

The protein belongs to the drug/metabolite transporter (DMT) superfamily. Small multidrug resistance (SMR) (TC 2.A.7.1) family. EbrA/EbrB subfamily. In terms of assembly, the efflux pump is composed of EbrA and EbrB.

The protein localises to the cell membrane. In terms of biological role, part of a multidrug efflux pump. Confers resistance to cationic lipophilic dyes such as ethidium bromide, acriflavine, pyronine Y and safranin O. The efflux is probably coupled to an influx of protons. This is Multidrug resistance protein EbrB (ebrB) from Bacillus licheniformis (strain ATCC 14580 / DSM 13 / JCM 2505 / CCUG 7422 / NBRC 12200 / NCIMB 9375 / NCTC 10341 / NRRL NRS-1264 / Gibson 46).